We begin with the raw amino-acid sequence, 255 residues long: Ribosomal RNA small subunit methyltransferase A (255 aa).

Residues Asn12, Leu14, Gly39, Glu60, Asp84, and Asn106 each coordinate S-adenosyl-L-methionine.

This sequence belongs to the class I-like SAM-binding methyltransferase superfamily. rRNA adenine N(6)-methyltransferase family. RsmA subfamily.

It is found in the cytoplasm. It carries out the reaction adenosine(1518)/adenosine(1519) in 16S rRNA + 4 S-adenosyl-L-methionine = N(6)-dimethyladenosine(1518)/N(6)-dimethyladenosine(1519) in 16S rRNA + 4 S-adenosyl-L-homocysteine + 4 H(+). Specifically dimethylates two adjacent adenosines (A1518 and A1519) in the loop of a conserved hairpin near the 3'-end of 16S rRNA in the 30S particle. May play a critical role in biogenesis of 30S subunits. The polypeptide is Ribosomal RNA small subunit methyltransferase A (Herminiimonas arsenicoxydans).